A 316-amino-acid polypeptide reads, in one-letter code: Ribosomal RNA small subunit methyltransferase H (316 aa).

S-adenosyl-L-methionine is bound by residues 35–37 (AGH), Asp55, Phe84, Asp105, and Gln112.

The protein belongs to the methyltransferase superfamily. RsmH family.

Its subcellular location is the cytoplasm. The enzyme catalyses cytidine(1402) in 16S rRNA + S-adenosyl-L-methionine = N(4)-methylcytidine(1402) in 16S rRNA + S-adenosyl-L-homocysteine + H(+). Functionally, specifically methylates the N4 position of cytidine in position 1402 (C1402) of 16S rRNA. The protein is Ribosomal RNA small subunit methyltransferase H of Streptococcus pneumoniae (strain Hungary19A-6).